A 387-amino-acid polypeptide reads, in one-letter code: 2-deoxystreptamine glucosyltransferase (387 aa).

This sequence belongs to the glycosyltransferase group 1 family.

It catalyses the reaction 2-deoxystreptamine + UDP-N-acetyl-alpha-D-glucosamine = 2'-N-acetylparomamine + UDP + H(+). It carries out the reaction 2-deoxystreptamine + UDP-alpha-D-glucose = 2'-deamino-2'-hydroxyparomamine + UDP + H(+). It participates in antibiotic biosynthesis; kanamycin biosynthesis. Functionally, glycosyltransferase involved in the biosynthesis of kanamycin by mediating conversion of 2-deoxystreptamine (2-DOS) to 2'-N-acetylparomamine using UDP-alpha-D-glucose as sugar donor. Can also accept UDP-alpha-D-glucosamine, but with a much lower activity compared to UDP-alpha-D-glucose. The chain is 2-deoxystreptamine glucosyltransferase (kanF) from Streptomyces kanamyceticus.